A 138-amino-acid polypeptide reads, in one-letter code: Ribonuclease VapC21 (138 aa).

A PINc domain is found at Leu6–Pro128. Mg(2+)-binding residues include Asp8 and Asp97.

Belongs to the PINc/VapC protein family. The cofactor is Mg(2+).

Its function is as follows. Toxic component of a type II toxin-antitoxin (TA) system. An RNase. Its toxic effect is neutralized by coexpression with cognate antitoxin VapB21. This Mycobacterium tuberculosis (strain CDC 1551 / Oshkosh) protein is Ribonuclease VapC21.